A 520-amino-acid chain; its full sequence is Cholesterol side-chain cleavage enzyme, mitochondrial (520 aa).

A mitochondrion-targeting transit peptide spans 1-39 (MLARGLALRSVLVKGCQPFLSAPRECPGHPRVGTGEGAC). Cys-461 lines the heme pocket.

It belongs to the cytochrome P450 family. As to quaternary structure, interacts with FDX1/adrenodoxin. Heme serves as cofactor.

The protein resides in the mitochondrion inner membrane. The catalysed reaction is 6 reduced [adrenodoxin] + cholesterol + 3 O2 + 6 H(+) = 4-methylpentanal + pregnenolone + 6 oxidized [adrenodoxin] + 4 H2O. It catalyses the reaction 2 reduced [adrenodoxin] + cholesterol + O2 + 2 H(+) = (22R)-hydroxycholesterol + 2 oxidized [adrenodoxin] + H2O. It carries out the reaction (22R)-hydroxycholesterol + 2 reduced [adrenodoxin] + O2 + 2 H(+) = (20R,22R)-20,22-dihydroxycholesterol + 2 oxidized [adrenodoxin] + H2O. The enzyme catalyses (20R,22R)-20,22-dihydroxycholesterol + 2 reduced [adrenodoxin] + O2 + 2 H(+) = 4-methylpentanal + pregnenolone + 2 oxidized [adrenodoxin] + 2 H2O. It participates in lipid metabolism; C21-steroid hormone metabolism. It functions in the pathway steroid metabolism; cholesterol metabolism. In terms of biological role, a cytochrome P450 monooxygenase that catalyzes the side-chain hydroxylation and cleavage of cholesterol to pregnenolone, the precursor of most steroid hormones. Catalyzes three sequential oxidation reactions of cholesterol, namely the hydroxylation at C22 followed with the hydroxylation at C20 to yield 20R,22R-hydroxycholesterol that is further cleaved between C20 and C22 to yield the C21-steroid pregnenolone and 4-methylpentanal. Mechanistically, uses molecular oxygen inserting one oxygen atom into a substrate and reducing the second into a water molecule. Two electrons are provided by NADPH via a two-protein mitochondrial transfer system comprising flavoprotein FDXR (adrenodoxin/ferredoxin reductase) and nonheme iron-sulfur protein FDX1 or FDX2 (adrenodoxin/ferredoxin). The sequence is that of Cholesterol side-chain cleavage enzyme, mitochondrial (CYP11A1) from Sus scrofa (Pig).